Here is a 1648-residue protein sequence, read N- to C-terminus: Kinesin-like protein KIF14 (1648 aa).

A disordered region spans residues 1–27 (MSLHSTHNRNNSGDILDIPSSQNSSSL). The segment at 1-356 (MSLHSTHNRN…AGKDPLKVEN (356 aa)) is required for PRC1-binding. A phosphoserine mark is found at Ser-12 and Ser-272. Thr-277 carries the post-translational modification Phosphothreonine. Ser-346 is modified (phosphoserine). The segment at 356–737 (NSQVTVAVRV…AAQRNSRNID (382 aa)) is required for microtubule-binding with high affinity. Residues 358 to 701 (QVTVAVRVRP…LRYANQARLI (344 aa)) enclose the Kinesin motor domain. Position 447-454 (447-454 (GQTGSGKS)) interacts with ATP. A coiled-coil region spans residues 705 to 791 (AKVNEDMNAK…QETKELQKAG (87 aa)). Residues 825 to 891 (TTVGKYKPNS…LRHGDRVILG (67 aa)) enclose the FHA domain. The segment at 901-1648 (PVEVQKGKRP…ECTPSRIQWV (748 aa)) is required for CIT-binding. A Phosphothreonine modification is found at Thr-915. Positions 922–1079 (KDFEFAKNEL…QNRNNRDKTF (158 aa)) form a coiled coil. A phosphoserine mark is found at Ser-937 and Ser-1292. Coiled-coil stretches lie at residues 1332–1348 (TNIARLEDELRQEVKKL) and 1468–1500 (ENIFAESKIKSFRRQVQEENFEYQDFKRMVNRA). The interval 1600–1648 (NTKEEHQQSKSSGIDGSKNKGVPKRVYELHGSSPAVSSEECTPSRIQWV) is disordered. The span at 1633–1648 (PAVSSEECTPSRIQWV) shows a compositional bias: polar residues.

It belongs to the TRAFAC class myosin-kinesin ATPase superfamily. Kinesin family. In terms of assembly, directly interacts with PRC1 within a complex also containing KIF4A, KIF20A and KIF23; targets to the central spindle. Directly interacts with CIT depending on the activation state of the kinase (stronger interaction with the kinase-dead form); targets to the midbody. Interacts with ARRB2; the interaction is detected in the nucleus upon OR1D2 stimulation. Interacts with AKT1; the interaction is detected in the plasma membrane upon INS stimulation and promotes AKT1 phosphorylation. Interacts with SVIL; at midbody during cytokinesis. Interacts with RADIL (via PDZ domain); recruits RADIL to the microtubule network restricting RADIL from interaction with activated RAP1A.

It localises to the nucleus. The protein resides in the cytoplasm. Its subcellular location is the cytoskeleton. It is found in the spindle. The protein localises to the midbody. Functionally, microtubule motor protein that binds to microtubules with high affinity through each tubulin heterodimer and has an ATPase activity. Plays a role in many processes like cell division, cytokinesis and also in cell proliferation and apoptosis. During cytokinesis, targets to central spindle and midbody through its interaction with PRC1 and CIT respectively. Regulates cell growth through regulation of cell cycle progression and cytokinesis. During cell cycle progression acts through SCF-dependent proteasomal ubiquitin-dependent protein catabolic process which controls CDKN1B degradation, resulting in positive regulation of cyclins, including CCNE1, CCND1 and CCNB1. During late neurogenesis, regulates the cerebellar, cerebral cortex and olfactory bulb development through regulation of apoptosis, cell proliferation and cell division. Also is required for chromosome congression and alignment during mitotic cell cycle process. Regulates cell spreading, focal adhesion dynamics, and cell migration through its interaction with RADIL resulting in regulation of RAP1A-mediated inside-out integrin activation by tethering RADIL on microtubules. This Homo sapiens (Human) protein is Kinesin-like protein KIF14.